A 365-amino-acid chain; its full sequence is Outer membrane porin protein LC (365 aa).

Positions 1–23 (MKKLTVAISAVAASVLMAMSAQA) are cleaved as a signal peptide.

This sequence belongs to the Gram-negative porin family. As to quaternary structure, homotrimer.

The protein localises to the host cell outer membrane. Its function is as follows. Forms pores that allow passive diffusion of small molecules across the host cell outer membrane. The sequence is that of Outer membrane porin protein LC (LC) from Enterobacteria phage PA-2 (Bacteriophage PA-2).